We begin with the raw amino-acid sequence, 50 residues long: Ornatin-E (50 aa).

A Cell attachment site motif is present at residues 42 to 44; it reads RGD.

Belongs to the ornatin family.

It is found in the secreted. Potent inhibitor of fibrinogen interaction with platelet receptors expressed on glycoprotein IIb-IIIa complex. May prevent blood from clotting during either feeding and/or storage of ingested blood. The chain is Ornatin-E from Placobdella ornata (Turtle leech).